Reading from the N-terminus, the 704-residue chain is Non-sulfated chondroitin lyase E66 (704 aa).

A signal peptide spans 1 to 23 (MSIVLIIVIVVIFLICFLYLSNS). Active-site proton acceptor residues include Asn236 and His291. Tyr299 (proton donor) is an active-site residue.

This sequence belongs to the baculoviridae E66 family.

The protein localises to the virion membrane. It is found in the host nucleus. It localises to the host cytoplasm. In terms of biological role, component of the polyhedra envelope. Plays an essential role in oral infectivity. May digest, with its chondroitin lyase activity, the chondroitin sulfate barrier of the peritrophic matrix of the host midgut to facilitate viral infection in the epithelial cells. The sequence is that of Non-sulfated chondroitin lyase E66 (P79) from Lepidoptera (butterflies and moths).